A 453-amino-acid chain; its full sequence is Chromosomal replication initiator protein DnaA (453 aa).

The interval methionine 1 to alanine 78 is domain I, interacts with DnaA modulators. The domain II stretch occupies residues alanine 78–serine 112. Residues asparagine 113–alanine 331 are domain III, AAA+ region. ATP contacts are provided by glycine 157, glycine 159, lysine 160, and threonine 161. Residues aspartate 332–arginine 453 are domain IV, binds dsDNA.

Belongs to the DnaA family. In terms of assembly, oligomerizes as a right-handed, spiral filament on DNA at oriC.

It localises to the cytoplasm. Functionally, plays an essential role in the initiation and regulation of chromosomal replication. ATP-DnaA binds to the origin of replication (oriC) to initiate formation of the DNA replication initiation complex once per cell cycle. Binds the DnaA box (a 9 base pair repeat at the origin) and separates the double-stranded (ds)DNA. Forms a right-handed helical filament on oriC DNA; dsDNA binds to the exterior of the filament while single-stranded (ss)DNA is stabiized in the filament's interior. The ATP-DnaA-oriC complex binds and stabilizes one strand of the AT-rich DNA unwinding element (DUE), permitting loading of DNA polymerase. After initiation quickly degrades to an ADP-DnaA complex that is not apt for DNA replication. Binds acidic phospholipids. This chain is Chromosomal replication initiator protein DnaA, found in Streptococcus agalactiae serotype Ia (strain ATCC 27591 / A909 / CDC SS700).